The chain runs to 1897 residues: uncharacterized protein (1897 aa).

Residues 1661-1888 form the Peptidase S74 domain; that stretch reads SDERVKTNIR…AKVISLESRL (228 aa). The stretch at 1865 to 1894 forms a coiled coil; sequence AALQEIDRQLQLEKAKVISLESRLSALELK.

This is an uncharacterized protein from Micromonas pusilla (Picoplanktonic green alga).